The primary structure comprises 42 residues: Delta-hexatoxin-Iw1a (42 aa).

Intrachain disulfides connect C1/C15, C8/C20, C14/C31, and C16/C42.

It belongs to the neurotoxin 06 (delta-actx) family. As to expression, expressed by the venom gland.

It localises to the secreted. Functionally, inhibits tetrodotoxin-sensitive sodium channels by binding to site 3. It slows the inactivation, causes a prolongation of action potential duration resulting in repetitive firing in autonomic and motor nerve fibers. Does not depolarize the resting potential. Does not affect tetrodotoxin-resistant sodium channels. This lethal neurotoxin is active on both insect and mammalian voltage-gated sodium channels (Nav). This Illawarra wisharti (Illawarra funnel-web spider) protein is Delta-hexatoxin-Iw1a.